Consider the following 160-residue polypeptide: Cytochrome c-type biogenesis protein CcmE (160 aa).

Residues M1 to R7 are Cytoplasmic-facing. Residues A8–A28 form a helical; Signal-anchor for type II membrane protein membrane-spanning segment. Residues M29–P160 lie on the Periplasmic side of the membrane. 2 residues coordinate heme: H122 and Y126. The segment at W141–P160 is disordered.

The protein belongs to the CcmE/CycJ family.

Its subcellular location is the cell inner membrane. Functionally, heme chaperone required for the biogenesis of c-type cytochromes. Transiently binds heme delivered by CcmC and transfers the heme to apo-cytochromes in a process facilitated by CcmF and CcmH. The protein is Cytochrome c-type biogenesis protein CcmE of Parvibaculum lavamentivorans (strain DS-1 / DSM 13023 / NCIMB 13966).